A 357-amino-acid polypeptide reads, in one-letter code: UDP-N-acetylglucosamine--N-acetylmuramyl-(pentapeptide) pyrophosphoryl-undecaprenol N-acetylglucosamine transferase (357 aa).

Residues 12–14 (TGG), Asn124, Arg163, Ser189, Ile243, 262–267 (ALTVSE), and Gln288 contribute to the UDP-N-acetyl-alpha-D-glucosamine site.

This sequence belongs to the glycosyltransferase 28 family. MurG subfamily.

Its subcellular location is the cell inner membrane. It carries out the reaction di-trans,octa-cis-undecaprenyl diphospho-N-acetyl-alpha-D-muramoyl-L-alanyl-D-glutamyl-meso-2,6-diaminopimeloyl-D-alanyl-D-alanine + UDP-N-acetyl-alpha-D-glucosamine = di-trans,octa-cis-undecaprenyl diphospho-[N-acetyl-alpha-D-glucosaminyl-(1-&gt;4)]-N-acetyl-alpha-D-muramoyl-L-alanyl-D-glutamyl-meso-2,6-diaminopimeloyl-D-alanyl-D-alanine + UDP + H(+). The protein operates within cell wall biogenesis; peptidoglycan biosynthesis. Cell wall formation. Catalyzes the transfer of a GlcNAc subunit on undecaprenyl-pyrophosphoryl-MurNAc-pentapeptide (lipid intermediate I) to form undecaprenyl-pyrophosphoryl-MurNAc-(pentapeptide)GlcNAc (lipid intermediate II). This Pseudomonas aeruginosa (strain LESB58) protein is UDP-N-acetylglucosamine--N-acetylmuramyl-(pentapeptide) pyrophosphoryl-undecaprenol N-acetylglucosamine transferase.